Consider the following 57-residue polypeptide: UPF0509 protein YciZ (57 aa).

This sequence belongs to the UPF0509 family.

This is UPF0509 protein YciZ (yciZ) from Escherichia coli O157:H7.